A 108-amino-acid polypeptide reads, in one-letter code: Putative transmembrane protein ORF108 (108 aa).

3 helical membrane-spanning segments follow: residues 11-31 (FIMG…SSII), 33-53 (IAMT…TVHF), and 69-89 (VGFL…LLII).

The protein localises to the host membrane. This Acidianus hospitalis (AFV-1) protein is Putative transmembrane protein ORF108.